The primary structure comprises 445 residues: GTPase Der (445 aa).

EngA-type G domains follow at residues 3–167 (PVIA…YAGQ) and 180–353 (IKIA…AAAM). GTP is bound by residues 9-16 (GRPNVGKS), 56-60 (DTGGF), 119-122 (NKAE), 186-193 (GRPNVGKS), 233-237 (DTAGL), and 298-301 (NKWD). The 85-residue stretch at 354–438 (AKLPTPKLTR…PLRIEFRSSN (85 aa)) folds into the KH-like domain.

This sequence belongs to the TRAFAC class TrmE-Era-EngA-EngB-Septin-like GTPase superfamily. EngA (Der) GTPase family. Associates with the 50S ribosomal subunit.

Its function is as follows. GTPase that plays an essential role in the late steps of ribosome biogenesis. This is GTPase Der from Burkholderia cenocepacia (strain HI2424).